We begin with the raw amino-acid sequence, 648 residues long: 1-deoxy-D-xylulose-5-phosphate synthase (648 aa).

Thiamine diphosphate is bound by residues His-72 and 113–115; that span reads GHA. Asp-144 is a binding site for Mg(2+). Thiamine diphosphate-binding positions include 145–146, Asn-173, and Glu-363; that span reads GA. Residue Asn-173 coordinates Mg(2+).

Belongs to the transketolase family. DXPS subfamily. As to quaternary structure, homodimer. It depends on Mg(2+) as a cofactor. The cofactor is thiamine diphosphate.

It carries out the reaction D-glyceraldehyde 3-phosphate + pyruvate + H(+) = 1-deoxy-D-xylulose 5-phosphate + CO2. It participates in metabolic intermediate biosynthesis; 1-deoxy-D-xylulose 5-phosphate biosynthesis; 1-deoxy-D-xylulose 5-phosphate from D-glyceraldehyde 3-phosphate and pyruvate: step 1/1. Functionally, catalyzes the acyloin condensation reaction between C atoms 2 and 3 of pyruvate and glyceraldehyde 3-phosphate to yield 1-deoxy-D-xylulose-5-phosphate (DXP). The sequence is that of 1-deoxy-D-xylulose-5-phosphate synthase from Symbiobacterium thermophilum (strain DSM 24528 / JCM 14929 / IAM 14863 / T).